Consider the following 479-residue polypeptide: Alpha,alpha-trehalose-phosphate synthase [UDP-forming] 2 (479 aa).

2 residues coordinate D-glucose 6-phosphate: Tyr-96 and Asp-150. UDP is bound by residues Arg-287 and Lys-292. UDP-alpha-D-glucose contacts are provided by Arg-287 and Lys-292. Arg-325 provides a ligand contact to D-glucose 6-phosphate. UDP is bound by residues 363-364 and 390-394; these read SV and LVSFE. Residue 386-394 coordinates UDP-alpha-D-glucose; the sequence is DGMNLVSFE.

This sequence belongs to the glycosyltransferase 20 family.

The enzyme catalyses D-glucose 6-phosphate + UDP-alpha-D-glucose = alpha,alpha-trehalose 6-phosphate + UDP + H(+). Its pathway is carbohydrate biosynthesis. Its function is as follows. Synthase catalytic subunit of the trehalose synthase complex that catalyzes the production of trehalose from glucose-6-phosphate and UDP-alpha-D-glucose in a two step process. The disaccharide trehalose serves as a storage carbohydrate that is mobilized during conidial germination. Regulates the level of trehalose as a protectant for cell integrity during thermal and oxidative stress. In Aspergillus fumigatus (strain ATCC MYA-4609 / CBS 101355 / FGSC A1100 / Af293) (Neosartorya fumigata), this protein is Alpha,alpha-trehalose-phosphate synthase [UDP-forming] 2.